Here is a 215-residue protein sequence, read N- to C-terminus: Phosphoenolpyruvate guanylyltransferase (215 aa).

Residues Thr144, Gly159, and Ser162 each coordinate phosphoenolpyruvate.

It belongs to the CofC family.

It carries out the reaction phosphoenolpyruvate + GTP + H(+) = enolpyruvoyl-2-diphospho-5'-guanosine + diphosphate. The protein operates within cofactor biosynthesis; coenzyme F420 biosynthesis. In terms of biological role, guanylyltransferase that catalyzes the activation of phosphoenolpyruvate (PEP) as enolpyruvoyl-2-diphospho-5'-guanosine, via the condensation of PEP with GTP. It is involved in the biosynthesis of coenzyme F420, a hydride carrier cofactor. The polypeptide is Phosphoenolpyruvate guanylyltransferase (Geodermatophilus obscurus (strain ATCC 25078 / DSM 43160 / JCM 3152 / CCUG 61914 / KCC A-0152 / KCTC 9177 / NBRC 13315 / NRRL B-3577 / G-20)).